A 342-amino-acid chain; its full sequence is Elongation factor Ts (342 aa).

Residues 79 to 82 are involved in Mg(2+) ion dislocation from EF-Tu; the sequence is TDFV.

It belongs to the EF-Ts family.

It is found in the cytoplasm. Its function is as follows. Associates with the EF-Tu.GDP complex and induces the exchange of GDP to GTP. It remains bound to the aminoacyl-tRNA.EF-Tu.GTP complex up to the GTP hydrolysis stage on the ribosome. This chain is Elongation factor Ts (tsf), found in Lactococcus lactis subsp. lactis (strain IL1403) (Streptococcus lactis).